Consider the following 131-residue polypeptide: Ribonuclease VapC3 (131 aa).

The PINc domain maps to 4 to 121; that stretch reads VVDASAIAAL…GKLLTLDRQL (118 aa). Mg(2+) contacts are provided by D6, D100, and D118.

Belongs to the PINc/VapC protein family. As to quaternary structure, homodimer. Forms a complex with putative antitoxin VapB3, possibly VapB(2)-VapC(2). Requires Mg(2+) as cofactor.

With respect to regulation, inhibited by EDTA. In terms of biological role, toxic component of a type II toxin-antitoxin (TA) system. Has ribonuclease activity. The chain is Ribonuclease VapC3 from Pyrobaculum aerophilum (strain ATCC 51768 / DSM 7523 / JCM 9630 / CIP 104966 / NBRC 100827 / IM2).